A 286-amino-acid polypeptide reads, in one-letter code: Ribosomal RNA small subunit methyltransferase A (286 aa).

The S-adenosyl-L-methionine site is built by asparagine 28, leucine 30, glycine 55, glutamate 77, aspartate 103, and asparagine 123.

This sequence belongs to the class I-like SAM-binding methyltransferase superfamily. rRNA adenine N(6)-methyltransferase family. RsmA subfamily.

The protein localises to the cytoplasm. It catalyses the reaction adenosine(1518)/adenosine(1519) in 16S rRNA + 4 S-adenosyl-L-methionine = N(6)-dimethyladenosine(1518)/N(6)-dimethyladenosine(1519) in 16S rRNA + 4 S-adenosyl-L-homocysteine + 4 H(+). Functionally, specifically dimethylates two adjacent adenosines (A1518 and A1519) in the loop of a conserved hairpin near the 3'-end of 16S rRNA in the 30S particle. May play a critical role in biogenesis of 30S subunits. The protein is Ribosomal RNA small subunit methyltransferase A of Bradyrhizobium sp. (strain BTAi1 / ATCC BAA-1182).